The primary structure comprises 363 residues: 3-methyl-D-ornithine--L-lysine ligase (363 aa).

K10 is a binding site for ATP. Residue 11 to 12 participates in L-lysine binding; sequence LQ. ATP contacts are provided by residues D31, 49–50, and 72–73; these read DV and EN. E72 is an L-lysine binding site. An ATP-grasp domain is found at 85-269; that stretch reads EEFSCPVLFD…LIELLFRAFG (185 aa). ADP-binding positions include K104, K131, S138, and 160-163; that span reads EEYV. D-ornithine-binding positions include 169–171 and D225; that span reads SLE. Residues E227, E239, and D241 each coordinate Mg(2+). E239 is a binding site for ADP. D-ornithine-binding positions include 243–248 and E302; that span reads RFPSQT. Positions 246 and 302 each coordinate L-lysine.

Belongs to the PylC family. It depends on Mg(2+) as a cofactor.

The catalysed reaction is (3R)-3-methyl-D-ornithine + L-lysine + ATP = (3R)-3-methyl-D-ornithyl-N(6)-L-lysine + ADP + phosphate + H(+). Its pathway is amino-acid biosynthesis; L-pyrrolysine biosynthesis. Its function is as follows. Is required for the biosynthesis of pyrrolysine. Catalyzes the ATP-dependent ligation between (3R)-3-methyl-D-ornithine and L-lysine, leading to (3R)-3-methyl-D-ornithyl-N6-L-lysine. The protein is 3-methyl-D-ornithine--L-lysine ligase of Methanosarcina acetivorans (strain ATCC 35395 / DSM 2834 / JCM 12185 / C2A).